A 320-amino-acid chain; its full sequence is Ferrochelatase (320 aa).

The Fe cation site is built by His-194 and Glu-275.

The protein belongs to the ferrochelatase family. In terms of assembly, monomer.

The protein resides in the cytoplasm. The catalysed reaction is heme b + 2 H(+) = protoporphyrin IX + Fe(2+). The protein operates within porphyrin-containing compound metabolism; protoheme biosynthesis; protoheme from protoporphyrin-IX: step 1/1. Catalyzes the ferrous insertion into protoporphyrin IX. The chain is Ferrochelatase from Salmonella arizonae (strain ATCC BAA-731 / CDC346-86 / RSK2980).